We begin with the raw amino-acid sequence, 212 residues long: uncharacterized protein (212 aa).

A signal peptide spans 1 to 20; sequence MRRVLLCFLTLILLLPAASA.

This is an uncharacterized protein from Archaeoglobus fulgidus (strain ATCC 49558 / DSM 4304 / JCM 9628 / NBRC 100126 / VC-16).